The chain runs to 233 residues: Phosphatidylserine decarboxylase proenzyme (233 aa).

The active-site Schiff-base intermediate with substrate; via pyruvic acid is Ser190. Ser190 bears the Pyruvic acid (Ser); by autocatalysis mark.

This sequence belongs to the phosphatidylserine decarboxylase family. PSD-A subfamily. Heterodimer of a large membrane-associated beta subunit and a small pyruvoyl-containing alpha subunit. Pyruvate serves as cofactor. Is synthesized initially as an inactive proenzyme. Formation of the active enzyme involves a self-maturation process in which the active site pyruvoyl group is generated from an internal serine residue via an autocatalytic post-translational modification. Two non-identical subunits are generated from the proenzyme in this reaction, and the pyruvate is formed at the N-terminus of the alpha chain, which is derived from the carboxyl end of the proenzyme. The post-translation cleavage follows an unusual pathway, termed non-hydrolytic serinolysis, in which the side chain hydroxyl group of the serine supplies its oxygen atom to form the C-terminus of the beta chain, while the remainder of the serine residue undergoes an oxidative deamination to produce ammonia and the pyruvoyl prosthetic group on the alpha chain.

The protein localises to the cell membrane. It carries out the reaction a 1,2-diacyl-sn-glycero-3-phospho-L-serine + H(+) = a 1,2-diacyl-sn-glycero-3-phosphoethanolamine + CO2. It participates in phospholipid metabolism; phosphatidylethanolamine biosynthesis; phosphatidylethanolamine from CDP-diacylglycerol: step 2/2. In terms of biological role, catalyzes the formation of phosphatidylethanolamine (PtdEtn) from phosphatidylserine (PtdSer). The polypeptide is Phosphatidylserine decarboxylase proenzyme (Bartonella quintana (strain Toulouse) (Rochalimaea quintana)).